The chain runs to 379 residues: MPTAFPPDSVGLVTPQIAHFSEPLALACGRALPAYDLIYETYGQLNASASNAVLICHALSGHHHAAGYHSVDDRKPGWWDSCIGPGKPIDTNRFFVVSLNNLGGCNGSTGPSSLNPDTGKPFGADFPVLTVEDWVHSQARLADRLGISQWAAVIGGSLGGMQALQWTITYPDRVRHCLAIASAPKLSAQNIAFNEVARQAILTDPEFHGGSFQEQGVIPKRGLMLARMVGHITYLSDDSMGEKFGRGLKSEKLNYDFHSVEFQVESYLRYQGEEFSGRFDANTYLLMTKALDYFDPAANCDDDLAKTFAHATAKFCVMSFTTDWRFSPARSRELVDALMAARKDVCYLEIDAPQGHDAFLIPIPRYLQAFSHYMNRITL.

The region spanning 51 to 360 is the AB hydrolase-1 domain; it reads NAVLICHALS…DAPQGHDAFL (310 aa). Ser157 acts as the Nucleophile in catalysis. Arg227 is a binding site for substrate. Active-site residues include Asp323 and His356. Asp357 provides a ligand contact to substrate.

This sequence belongs to the AB hydrolase superfamily. MetX family. As to quaternary structure, homodimer.

It is found in the cytoplasm. It catalyses the reaction L-homoserine + succinyl-CoA = O-succinyl-L-homoserine + CoA. It participates in amino-acid biosynthesis; L-methionine biosynthesis via de novo pathway; O-succinyl-L-homoserine from L-homoserine: step 1/1. Functionally, transfers a succinyl group from succinyl-CoA to L-homoserine, forming succinyl-L-homoserine. This is Homoserine O-succinyltransferase from Pseudomonas fluorescens (strain ATCC BAA-477 / NRRL B-23932 / Pf-5).